We begin with the raw amino-acid sequence, 651 residues long: Beta-glucuronidase (651 aa).

Residues 1–22 form the signal peptide; that stretch reads MARGSAVAWAAFGPLLWGCALG. N-linked (GlcNAc...) asparagine glycans are attached at residues N173, N190, N272, and N420. E451 acts as the Proton donor in catalysis. N631 carries an N-linked (GlcNAc...) asparagine glycan.

The protein belongs to the glycosyl hydrolase 2 family. In terms of assembly, homotetramer.

It is found in the lysosome. The enzyme catalyses a beta-D-glucuronoside + H2O = D-glucuronate + an alcohol. Its activity is regulated as follows. Inhibited by L-aspartic acid. Its function is as follows. Plays an important role in the degradation of dermatan and keratan sulfates. The sequence is that of Beta-glucuronidase (GUSB) from Pongo abelii (Sumatran orangutan).